The sequence spans 1400 residues: MVSKTDDIPASVPNCSPADFARDGETANSKGTTSKKEASCACGHGVETAVMNGDAGHDQAEEADSKQDGSGDADQAEDANEQEVIVIQDTGFTVKIQAPGTEPFDLQVSPQEMVQEIHQVLMDREDTCHRTCFSLQLDGNVLDNFAELKSIEGLQEGSLLKVVEEPYTVREARIHVRHIRDLLKSLDPSDAYNGVDCNSLSFLSVFSEGDLGDTGKRKKKGSELEQIDCTPPEHILPGSKERPLVPLQPQNKDWKPMQCLKVLTMSSWNPPPGNRKMHGDLMYLYIVTVEDRHVSITASTRGFYLNQSTTYNFSPKPANPSFLSHSLVELLSQISAAFKKNFTTLQKKRVQRHPFERIATPFQVYSWTAPQIDHAMDCVRAEDAYTSRLGYEEHIPGQTRDWNEELQTTRELSRKNLPERLLRERAIFKVHSDFAAAATRGAMAVIDGNVMAINPGEETRMQMFIWNNIFFSLGFDVRDHYRELGGDSAAHAAPTNDLNGVRAYSAVDVEGLYTLGTVVVDYRGYRVTAQSIIPGILEREQEQSVIYGSIDFGKTVVSHPKYLELLEKTSRPLKVQRHAVLNEKDSAVELCSSVECKGIIGNDGRHYILDLLRTFPPDLNFLPVEGEELTPESQKLGFPRQHRHRLACLRQELIEAFVEHRYLLFMKMAALQLMQQKANKDKTAALQDSNAAGAGSENKPLALESCDGTPDSPTSSESTLTPEDSEATTVSENSSAENQEAMTEVPVASINGTHEPLAAERQNGGCDGPLEGKEADENIPGLAQAKELAESLAAEDGSGIDPKSREVVLNACKAVGSISNTSFDIRFNPDIFSPGVRFPDDSNDDIKKQKQLLKDAAAFLVSCQIPSLVKDCLDHSSLPMDGATLTEALHQRGINVRYLGTVLEFMDNMPAKAQLEHIYRIGISELITRCAKHIFKTYLQGVDLSALSAAVSYFLNCLLSSFPDAVAHLPADELVSRKKSRKRRNRVPGGGDNTAWASLTPSELWKNITSEAHGYYNFSLQCESVDQAVEKYGLQKITLLREISIKTGIQILIKEYNFDSRHKPAFTEEDILNIFPVVKHVNPKASDAFHFFQSGQAKVQQGFLKEGCELINEALNLFNNVYGAMHVEICACLRLLARLNYIMGDHPEALSNQQKAVLMSERVLGIEHPNTIQEYMHLALYCFANGQLSTALKLLYRARYLMLVVCGEDHPEMALLDSNIGLVLHGVMEYDLSLRFLENALAINTKYHGPRSLKVALSHHLVARVYESKAEFRSALQHEKEGYTIYKNQVGEAHEKTKESSEYLKYLTQQAVALQRTMNEIYKNGSNASIMPLKFTAPSMASVLEQLNIINGIIFIPLSQKDLENLKAEVQRRQLMQDSGKIQEQQGSHLELDDKLPVDD.

3 disordered regions span residues 1 to 39 (MVSKTDDIPASVPNCSPADFARDGETANSKGTTSKKEAS), 56 to 78 (GHDQAEEADSKQDGSGDADQAED), and 212 to 243 (GDTGKRKKKGSELEQIDCTPPEHILPGSKERP). The segment covering 56–69 (GHDQAEEADSKQDG) has biased composition (basic and acidic residues). The Clu domain maps to 380 to 622 (RAEDAYTSRL…RTFPPDLNFL (243 aa)). Residues 684–741 (AALQDSNAAGAGSENKPLALESCDGTPDSPTSSESTLTPEDSEATTVSENSSAENQEA) form a disordered region. Residues 707–722 (DGTPDSPTSSESTLTP) show a composition bias toward low complexity. Residues 727 to 741 (ATTVSENSSAENQEA) are compositionally biased toward polar residues. TPR repeat units follow at residues 1088-1121 (AFHFFQSGQAKVQQGFLKEGCELINEALNLFNNV), 1130-1163 (CACLRLLARLNYIMGDHPEALSNQQKAVLMSERV), 1172-1205 (IQEYMHLALYCFANGQLSTALKLLYRARYLMLVV), and 1214-1247 (ALLDSNIGLVLHGVMEYDLSLRFLENALAINTKY). The segment covering 1377 to 1388 (QDSGKIQEQQGS) has biased composition (polar residues). The tract at residues 1377 to 1400 (QDSGKIQEQQGSHLELDDKLPVDD) is disordered. Residues 1390–1400 (LELDDKLPVDD) show a composition bias toward basic and acidic residues.

The protein belongs to the CLU family.

It is found in the cytoplasm. In terms of biological role, mRNA-binding protein involved in proper cytoplasmic distribution of mitochondria. The protein is Clustered mitochondria protein homolog of Danio rerio (Zebrafish).